We begin with the raw amino-acid sequence, 320 residues long: tRNA U34 carboxymethyltransferase (320 aa).

Residues Lys-89, Trp-103, Lys-108, Gly-128, 150–152 (DPT), 179–180 (IE), Met-194, Tyr-198, and Arg-313 each bind carboxy-S-adenosyl-L-methionine.

It belongs to the class I-like SAM-binding methyltransferase superfamily. CmoB family. Homotetramer.

It carries out the reaction carboxy-S-adenosyl-L-methionine + 5-hydroxyuridine(34) in tRNA = 5-carboxymethoxyuridine(34) in tRNA + S-adenosyl-L-homocysteine + H(+). Its function is as follows. Catalyzes carboxymethyl transfer from carboxy-S-adenosyl-L-methionine (Cx-SAM) to 5-hydroxyuridine (ho5U) to form 5-carboxymethoxyuridine (cmo5U) at position 34 in tRNAs. The protein is tRNA U34 carboxymethyltransferase of Glaesserella parasuis serovar 5 (strain SH0165) (Haemophilus parasuis).